We begin with the raw amino-acid sequence, 190 residues long: Crossover junction endodeoxyribonuclease RuvC (190 aa).

Catalysis depends on residues D8, E67, and D139. Residues D8, E67, and D139 each contribute to the Mg(2+) site.

Belongs to the RuvC family. Homodimer which binds Holliday junction (HJ) DNA. The HJ becomes 2-fold symmetrical on binding to RuvC with unstacked arms; it has a different conformation from HJ DNA in complex with RuvA. In the full resolvosome a probable DNA-RuvA(4)-RuvB(12)-RuvC(2) complex forms which resolves the HJ. Requires Mg(2+) as cofactor.

The protein resides in the cytoplasm. The catalysed reaction is Endonucleolytic cleavage at a junction such as a reciprocal single-stranded crossover between two homologous DNA duplexes (Holliday junction).. Functionally, the RuvA-RuvB-RuvC complex processes Holliday junction (HJ) DNA during genetic recombination and DNA repair. Endonuclease that resolves HJ intermediates. Cleaves cruciform DNA by making single-stranded nicks across the HJ at symmetrical positions within the homologous arms, yielding a 5'-phosphate and a 3'-hydroxyl group; requires a central core of homology in the junction. The consensus cleavage sequence is 5'-(A/T)TT(C/G)-3'. Cleavage occurs on the 3'-side of the TT dinucleotide at the point of strand exchange. HJ branch migration catalyzed by RuvA-RuvB allows RuvC to scan DNA until it finds its consensus sequence, where it cleaves and resolves the cruciform DNA. The polypeptide is Crossover junction endodeoxyribonuclease RuvC (Haemophilus influenzae (strain ATCC 51907 / DSM 11121 / KW20 / Rd)).